The sequence spans 1159 residues: MALELIERGCPNCGGVISSDRLEKGLPCSKCLPKPTEEKVCDALEELKTLKYLKPFCDTDKSLERFINFFEKAVGAKPWSLQRVWAKRVFMNQSFAIVAPTGVGKTTFGLVMSLFLKGRVLAIFPTRLLAQQAGDRLSELAQKVGVNKKILIYQSKKNIREQFLNGDWDILLGTNMFLHKNFENLINFKFKLIFIDDIDSFLKRGKNVDYLFKLLGFSGEEIKLALKENKTQRDYDRLARIRKRKRDTVLIVSSATLKPRGKRAYLFRNLLGFDVQKAITTLRNIVDVAEPVKDLEEALEKSVELIKKLGKGGLVYLSVFYGKDKVQEVKEFYRKHGINAVSYLDYKPEELYQILEKGEFDVAVGISHITNPLVRGIDLPHIIRYAVFLDPPKHVFPTELTLSPPLLHGLLLTLLNLFEGDDRLKAIQYVMYLKRYLTLREEQLDNYPRIKERVEEIKNFLENYLKDENFLKKIKESEDISLVPKEGKLYIVVGDANSYIQASGRTSRFIAGGMTKGLSVVYYSDPKAFYSLKKRLALYYMTQEIEFKRLSEVDLNKLIKEIDEDRKRAREILQGKGVAQIKDLFKTTLVIVESPNKARTIAGFFGKPQMRLVEDSVAYEVPLGDRLLVITASLGHVLDLVTDKGFFGVLDDTYPYLPVYDTIKICRETHEQHTEYEYLKKRCKGKIEDKLEIIKGVREVSYEVDEVFIATDPDAEGEKIGYDLYLLSKPFNFNIKRAEFHEVTPKAFREAIQNPREVDLNLVKAQLVRRILDRWVGFTLSHILWDAFGKKWLSAGRVQTPVLGWVIKRYEESKEKKGEILLHVNDFPLKIEIEDLMFAKEIFKDLELADISLSNPQEEEKRPLPPYTTDTVLEDANEKLHLSAHKTMKILQELFEAGYITYHRTDSTRVSDAGKYLVAKPYITKMFGEEYFYPRSWGEGGAHECIRPTRPLEPKDLEFMITAGIAEFEDPENALKVYELIFKRFMASQMRPAKVITEEIILKLPYFEWKERVVTEVKEHGFDLMYPTFKVFPKKEKLEITHKEFREVPKVYPYTQGTLIQEMKRRGLGRPSTYAQIVQTLLERHYVVEEKGFLIPTDLGREVYEYLTKHFPEWTSEELTRKLEEAMDKIERGELDYMEVLKEVHRIKVLLKEEKAFKK.

Residues 1–40 (MALELIERGCPNCGGVISSDRLEKGLPCSKCLPKPTEEKV) form an RG N-terminal-type zinc finger. Zn(2+) is bound by residues C10, C13, C28, and C31. Residues Q82 and 99 to 106 (APTGVGKT) each bind ATP. Residues 86-275 (AKRVFMNQSF…LFRNLLGFDV (190 aa)) enclose the Helicase ATP-binding domain. Positions 196 to 199 (DDID) match the DEAD box motif. Residues 583–1159 (DLFKTTLVIV…LLKEEKAFKK (577 aa)) are topoisomerase I. The 157-residue stretch at 587–743 (TTLVIVESPN…NIKRAEFHEV (157 aa)) folds into the Toprim domain. Mg(2+) contacts are provided by E593 and D712. The 394-residue stretch at 759–1152 (DLNLVKAQLV…EVHRIKVLLK (394 aa)) folds into the Topo IA-type catalytic domain. The O-(5'-phospho-DNA)-tyrosine intermediate role is filled by Y902.

This sequence in the N-terminal section; belongs to the DEAD box helicase family. DDVD subfamily. In the C-terminal section; belongs to the type IA topoisomerase family. As to quaternary structure, monomer. It depends on Zn(2+) as a cofactor. Requires Mg(2+) as cofactor.

Its subcellular location is the cytoplasm. It carries out the reaction ATP + H2O = ADP + phosphate + H(+). In terms of biological role, modifies the topological state of DNA by introducing positive supercoils in an ATP-dependent process, increasing the linking number in steps of +1. Binds to single-stranded DNA, transiently cleaves and then rejoins the ends, introducing a positive supercoil in the process. The scissile phosphodiester is attacked by the catalytic tyrosine of the enzyme, resulting in the formation of a DNA-(5'-phosphotyrosyl)-enzyme intermediate. Probably involved in rewinding DNA strands in regions of the chromosome that have opened up to allow replication, transcription, DNA repair and/or for DNA protection. This Aquifex aeolicus (strain VF5) protein is Reverse gyrase 2.